Consider the following 173-residue polypeptide: Lactoylglutathione lyase (173 aa).

Positions V24–P170 constitute a VOC domain. Residue H27 coordinates Ni(2+). R31 is a binding site for substrate. A Ni(2+)-binding site is contributed by E93. The substrate site is built by N97, R116, and H120. Positions 120 and 166 each coordinate Ni(2+). E166 (proton donor/acceptor) is an active-site residue.

This sequence belongs to the glyoxalase I family. In terms of assembly, monomer. The cofactor is Ni(2+). Zn(2+) serves as cofactor.

The catalysed reaction is (R)-S-lactoylglutathione = methylglyoxal + glutathione. Its pathway is secondary metabolite metabolism; methylglyoxal degradation; (R)-lactate from methylglyoxal: step 1/2. Functionally, catalyzes the conversion of hemimercaptal, formed from methylglyoxal and glutathione, to S-lactoylglutathione. The sequence is that of Lactoylglutathione lyase (gloA) from Pseudomonas putida (Arthrobacter siderocapsulatus).